Reading from the N-terminus, the 660-residue chain is E3 ubiquitin-protein ligase ORTHRUS 3 (660 aa).

The segment at 12–63 adopts a PHD-type zinc-finger fold; that stretch reads EGVCMRCKSMPPPEESLTCGTCVTPWHVSCLLSPPETLSATLQWLCPDCSGE. The interval 107–129 is disordered; the sequence is QLLSGKGVVDEDDEEEKKKTSKG. Residues 141-197 form an RING-type 1 zinc finger; the sequence is CSFCMQSLQKPVSVRVLFALALMLVWFLESTPCGHNACLKCFLKWMGQGHRSCGTCR. The region spanning 285-434 is the YDG domain; that stretch reads VRNQGLLVGE…CRFLFVRCDN (150 aa). Residues 528–585 form an RING-type 2 zinc finger; it reads CQICQKVMTNPVTTPCAHNFCKACLESKFAGTALVRERGSGGRKLRSQKSVMKCPCCP. The stretch at 593 to 622 forms a coiled coil; it reads QNPQVNREVAEVIEKLKKQEEEENAKSLDE. Composition is skewed to basic and acidic residues over residues 610-621 and 637-646; these read KQEEEENAKSLD and QPKKRIKLDT. Residues 610-660 are disordered; sequence KQEEEENAKSLDEGQCSGTSHEEEDDEQPKKRIKLDTDAEVSATVVESDMK.

It localises to the nucleus. The catalysed reaction is S-ubiquitinyl-[E2 ubiquitin-conjugating enzyme]-L-cysteine + [acceptor protein]-L-lysine = [E2 ubiquitin-conjugating enzyme]-L-cysteine + N(6)-ubiquitinyl-[acceptor protein]-L-lysine.. Its pathway is protein modification; protein ubiquitination. E3 ubiquitin-protein ligase. May participate in CpG methylation-dependent transcriptional regulation. The sequence is that of E3 ubiquitin-protein ligase ORTHRUS 3 (ORTH3) from Arabidopsis thaliana (Mouse-ear cress).